The chain runs to 523 residues: Peptide chain release factor 3 (523 aa).

A tr-type G domain is found at E10–E277. GTP contacts are provided by residues S19–T26, D87–H91, and N141–D144.

This sequence belongs to the TRAFAC class translation factor GTPase superfamily. Classic translation factor GTPase family. PrfC subfamily.

It is found in the cytoplasm. In terms of biological role, increases the formation of ribosomal termination complexes and stimulates activities of RF-1 and RF-2. It binds guanine nucleotides and has strong preference for UGA stop codons. It may interact directly with the ribosome. The stimulation of RF-1 and RF-2 is significantly reduced by GTP and GDP, but not by GMP. The chain is Peptide chain release factor 3 from Lactobacillus acidophilus (strain ATCC 700396 / NCK56 / N2 / NCFM).